The primary structure comprises 331 residues: Lipoyl synthase (331 aa).

Positions 60, 65, 71, 86, 90, 93, and 301 each coordinate [4Fe-4S] cluster. A Radical SAM core domain is found at 72–290 (WSRGTATFML…REEGMQLGFL (219 aa)).

Belongs to the radical SAM superfamily. Lipoyl synthase family. [4Fe-4S] cluster is required as a cofactor.

Its subcellular location is the cytoplasm. It catalyses the reaction [[Fe-S] cluster scaffold protein carrying a second [4Fe-4S](2+) cluster] + N(6)-octanoyl-L-lysyl-[protein] + 2 oxidized [2Fe-2S]-[ferredoxin] + 2 S-adenosyl-L-methionine + 4 H(+) = [[Fe-S] cluster scaffold protein] + N(6)-[(R)-dihydrolipoyl]-L-lysyl-[protein] + 4 Fe(3+) + 2 hydrogen sulfide + 2 5'-deoxyadenosine + 2 L-methionine + 2 reduced [2Fe-2S]-[ferredoxin]. Its pathway is protein modification; protein lipoylation via endogenous pathway; protein N(6)-(lipoyl)lysine from octanoyl-[acyl-carrier-protein]: step 2/2. Functionally, catalyzes the radical-mediated insertion of two sulfur atoms into the C-6 and C-8 positions of the octanoyl moiety bound to the lipoyl domains of lipoate-dependent enzymes, thereby converting the octanoylated domains into lipoylated derivatives. The sequence is that of Lipoyl synthase from Deinococcus radiodurans (strain ATCC 13939 / DSM 20539 / JCM 16871 / CCUG 27074 / LMG 4051 / NBRC 15346 / NCIMB 9279 / VKM B-1422 / R1).